Here is a 394-residue protein sequence, read N- to C-terminus: Elongation factor Tu-A (394 aa).

The tr-type G domain occupies 10–204 (KPHVNVGTIG…ALDTYIPEPE (195 aa)). The G1 stretch occupies residues 19–26 (GHVDHGKT). Residue 19-26 (GHVDHGKT) participates in GTP binding. Thr26 serves as a coordination point for Mg(2+). The segment at 60 to 64 (GITIN) is G2. The interval 81–84 (DCPG) is G3. GTP is bound by residues 81 to 85 (DCPGH) and 136 to 139 (NKCD). The segment at 136–139 (NKCD) is G4. The G5 stretch occupies residues 174 to 176 (SAL).

It belongs to the TRAFAC class translation factor GTPase superfamily. Classic translation factor GTPase family. EF-Tu/EF-1A subfamily. In terms of assembly, monomer.

The protein localises to the cytoplasm. It catalyses the reaction GTP + H2O = GDP + phosphate + H(+). Functionally, GTP hydrolase that promotes the GTP-dependent binding of aminoacyl-tRNA to the A-site of ribosomes during protein biosynthesis. The protein is Elongation factor Tu-A of Vibrio cholerae serotype O1 (strain ATCC 39315 / El Tor Inaba N16961).